The chain runs to 392 residues: ABSCISIC ACID-INSENSITIVE 5-like protein 4 (392 aa).

The disordered stretch occupies residues 1-22 (MGTHIDINNLGGDTSRGNESKP). Phosphoserine is present on residues S28, S50, and S96. A Phosphothreonine modification is found at T135. Residues 266-297 (NMGGAGGTVTATSPGTSSAENNTWSSPVPYVF) are disordered. A compositionally biased stretch (polar residues) spans 274–291 (VTATSPGTSSAENNTWSS). Positions 311–374 (VERRQKRMIK…NSELKEFSKQ (64 aa)) constitute a bZIP domain. The tract at residues 313 to 332 (RRQKRMIKNRESAARSRARK) is basic motif. The leucine-zipper stretch occupies residues 339–360 (LEAEIESLKLVNQDLQKKQAEI).

The protein belongs to the bZIP family. ABI5 subfamily. In terms of assembly, DNA-binding heterodimer. Interacts with ABI3 and the AFP proteins AFP1, AFP2, AFP3 and AFP4. Post-translationally, phosphorylated by CPK4, CPK11, SRK2D and SRK2I in vitro.

It localises to the nucleus. Its function is as follows. Binds to the ABA-responsive element (ABRE). Could participate in abscisic acid-regulated gene expression. The polypeptide is ABSCISIC ACID-INSENSITIVE 5-like protein 4 (ABF1) (Arabidopsis thaliana (Mouse-ear cress)).